The chain runs to 679 residues: Methionine--tRNA ligase (679 aa).

Residues 12–22 (PYANGAIHLGH) carry the 'HIGH' region motif. Zn(2+)-binding residues include cysteine 143, cysteine 146, cysteine 156, and cysteine 159. Residues 328-332 (KMSKS) carry the 'KMSKS' region motif. Lysine 331 is a binding site for ATP. The tRNA-binding domain occupies 577 to 679 (DFAKLDLRVA…EGIRPGMQVK (103 aa)).

The protein belongs to the class-I aminoacyl-tRNA synthetase family. MetG type 1 subfamily. As to quaternary structure, homodimer. Requires Zn(2+) as cofactor.

The protein localises to the cytoplasm. The catalysed reaction is tRNA(Met) + L-methionine + ATP = L-methionyl-tRNA(Met) + AMP + diphosphate. In terms of biological role, is required not only for elongation of protein synthesis but also for the initiation of all mRNA translation through initiator tRNA(fMet) aminoacylation. This Actinobacillus pleuropneumoniae serotype 5b (strain L20) protein is Methionine--tRNA ligase.